Consider the following 25-residue polypeptide: Gamma-conotoxin PiVIIA (25 aa).

3 disulfide bridges follow: cysteine 1-cysteine 15, cysteine 8-cysteine 19, and cysteine 14-cysteine 24. Proline 4 is modified (4-hydroxyproline). 4-carboxyglutamate is present on residues glutamate 13 and glutamate 20.

Belongs to the conotoxin O2 superfamily. As to expression, expressed by the venom duct.

The protein resides in the secreted. Its function is as follows. Micromolar concentrations of PiVIIA increase the magnitude of the macroscopic calcium current in DRG neurons from rat. An increase, even modest of the calcium current, may have a significant impact in the excitability and electrical activity of neurons, and may set up PiVIIA as a member of the pharmacological family of the gamma-conotoxins. This Conus princeps (Prince cone) protein is Gamma-conotoxin PiVIIA.